We begin with the raw amino-acid sequence, 186 residues long: A-type ATP synthase subunit E (186 aa).

It belongs to the V-ATPase E subunit family. In terms of assembly, has multiple subunits with at least A(3), B(3), C, D, E, F, H, I and proteolipid K(x).

Its subcellular location is the cell membrane. Component of the A-type ATP synthase that produces ATP from ADP in the presence of a proton gradient across the membrane. In Methanocella arvoryzae (strain DSM 22066 / NBRC 105507 / MRE50), this protein is A-type ATP synthase subunit E.